A 519-amino-acid chain; its full sequence is Circadian clock oscillator protein KaiC (519 aa).

Positions 1–247 constitute a KaiC 1 domain; that stretch reads MTSAEMTSPN…TITDHGINIF (247 aa). 6 residues coordinate ATP: Gly-49, Thr-50, Gly-51, Lys-52, Thr-53, and Leu-54. Thr-53 provides a ligand contact to Mg(2+). Glu-77 serves as the catalytic Proton acceptor in CI (KaiC 1). Ser-89 provides a ligand contact to ATP. The B-loop, required to bind KaiB and SasA stretch occupies residues 115 to 122; sequence QEVVGGFD. Residues Lys-224, Leu-225, Arg-226, Thr-228, His-230, Thr-240, and Asp-241 each coordinate ATP. Residues 248–260 are linker; sequence PLGAMRLTQRSSN. Residues 261 to 519 form the KaiC 2 domain; sequence VRVSSGVVRL…RGVQEKGPES (259 aa). 7 residues coordinate ATP: Thr-290, Gly-291, Thr-292, Gly-293, Lys-294, Thr-295, and Leu-296. Residue Thr-295 coordinates Mg(2+). Glu-318 is a binding site for Mg(2+). Glu-318 serves as the catalytic Proton acceptor in CII (KaiC 2). Trp-331 provides a ligand contact to ATP. Residue Ser-431 is modified to Phosphoserine; by autocatalysis. Phosphothreonine; by autocatalysis is present on Thr-432. ATP is bound by residues Arg-451, Lys-457, Met-458, Arg-459, Ser-461, His-463, and Lys-465. The A-loop, interacts with KaiA stretch occupies residues 488–497; sequence RIISGSPTRI.

Belongs to the KaiC family. Homohexamer resembling 2 stacked donuts with a central pore nearly blocked on one side; hexamerization is dependent on ATP-binding. Binds 12 ATP; 6 between each subunit in both layers. KaiB only binds to phospho-Ser-431 KaiC (not doubly phosphorylated KaiC). Complex formation between KaiB and KaiC is regulated by the phosphorylation state of KaiC and by an ATP hydrolysis-driven conformation change in the CI ring of KaiC; complex formation is slow. Slow complex formation is crucial for the timing of the circadian period. KaiB switches to a thioredoxin-like form called KaiB(fs) when bound to KaiC. The KaiABC complex composition changes during the circadian cycle to control KaiC phosphorylation. Complexes KaiC(6), KaiA(2-4):KaiC(6), KaiB(6):KaiC(6) and KaiC(6):KaiB(6):KaiA(12) are among the most important forms, many form cooperatively. Interacts directly with KaiB and SasA. The CI domain binds to KaiB and SasA; as they have a similar fold they compete for the same site on CI. CikA interacts with this protein in the clock complex. Binds to the C-terminus of KaiA via a coiled-coil structure. Forms KaiC(6):KaiB(1) and KaiC(6):KaiB(6) complexes. Mg(2+) is required as a cofactor. In terms of processing, has a 4 step phosphorylation cycle; the autokinase acts first on Thr-432, then Ser-431. When Ser-431 is modified KaiC switches to an autophosphatase mode, acting first on phospho-Thr-432 then phospho-Ser-431. Phosphorylated and dephosphorylated on serine/threonine residues by autocatalysis. Unphosphorylated, mono- and di-phosphorylated forms exist. The phosphorylated form correlates with clock speed. The presence of KaiA increases phosphorylation and stabilizes these forms. Phosphorylated on serine and threonine residues by autocatalysis. Has a 4 step phosphorylation cycle; the autokinase acts first on Thr-432, then Ser-431. When Ser-431 is modified KaiC switches to an autophosphatase mode, acting first on phospho-Thr-432 then phospho-Ser-431.

It catalyses the reaction L-seryl-[protein] + ATP = O-phospho-L-seryl-[protein] + ADP + H(+). The enzyme catalyses L-threonyl-[protein] + ATP = O-phospho-L-threonyl-[protein] + ADP + H(+). It carries out the reaction ATP + H2O = ADP + phosphate + H(+). Interaction with KaiA stimulates autophosphorylation, KaiC interaction with KaiB sequesters KaiA, preventing it stimulating the KaiC kinase, leading to autodephosphorylation. A KaiA dimer is sufficient to enhance KaiC phosphorylation. Interaction of KaiA with the A-loop stimulates autokinase activity. The KaiABC oscillator complex constitutes the main circadian regulator in cyanobacteria. Complex composition changes during the circadian cycle to control KaiC phosphorylation; KaiA stimulates KaiC autophosphorylation, while KaiB sequesters KaiA, leading to KaiC autodephosphorylation. The Kai complex controls chromosome condensation, leading to a transcription accessible chromosome during the first half of the circadian cycle and a compact, less transcription-accessible chromosome during the latter half. Clock output pathways impact the RpaA transcriptional regulator. Circadian oscillations can be generated in vitro by incubating KaiA, KaiB and KaiC with 1 mM ATP. The cycle is self-sustainable for at least 3 cycles and resistant to temperature changes. Mutations in KaiC alone prolong or reduce the circadian rhythm. A very robust clock is reconstituted with KaiA, KaiB, KaiC, SasA, CikA and RpaA; output is measured by transcription from an appropriate reporter. Functionally, the level of KaiC phosphorylation and KaiC ATPase activity represent the key features of the biochemical oscillator. KaiA homodimer binding to the KaiC CII domain stimulates KaiC's ATPase activity and forms KaiA(2-4):KaiC(6) complexes, which stimulate KaiC autophosphorylation first on Thr-432 then Ser-431. Phospho-Ser-431-KaiC accumulation triggers binding of KaiB to CI to form the KaiB(6):KaiC(6) complex, leading to changes in the output regulators CikA and SasA. KaiB(6):KaiC(6) formation exposes a site for KaiA binding that sequesters KaiA from the CII domain, making the KaiC(6):KaiB(6):KaiA(12) complex that results in KaiC autodephosphorylation. Complete dephosphorylation of KaiC leads to dissociation of KaiA(2):KaiB(1), completing 1 cycle of the Kai oscillator. Its function is as follows. Has a weak, temperature-independent ATPase activity (about 15 molecules of ATP per day); the addition of KaiA and KaiB increases activity slightly and makes the activity oscillate with a circadian period in vitro for over 60 hours. ATPase activity defines the circadian period. The phosphorylation state of KaiC modulates its ATPase activity and effects KaiB binding. In terms of biological role, there are several clock output pathways; SasA/RpaA, CikA/RpaA and LabA. KaiC enhances the autophosphorylation activity of SasA, which then transfers its phosphate group to RpaA to activate it. Phosphotransfer is maximal when KaiC phosphorylation is active during the circadian cycle. KaiB and KaiC together enhance the phosphatase activity of CikA on phospho-RpaA. KaiC is important for metabolic partitioning during the dark to light shift, modulating the balance between the Calvin cycle and oxidative pentose phosphate pathway under natural growth conditions. This is Circadian clock oscillator protein KaiC from Synechococcus elongatus (strain ATCC 33912 / PCC 7942 / FACHB-805) (Anacystis nidulans R2).